We begin with the raw amino-acid sequence, 315 residues long: MDALLKEIEKLSQPSLQKENNDVCDLCFMQMKKISNYQLLCEECGQLKDWFEPEYNEKFTVYSRLKIVGANSSYHQRDLDKANSSDYSSLQFHHILEELKTLNVKYMDAGQKPFPIQVLKETAHSYNQVQQHRVIRSITKLQILASILRSICLKLNIACTVADAARFTQLNTKGISRGMDLLRSLFVDNKITLNVDLNPIDSFINSTYNALQIKQIHQELQEENVYNLKEIVKSFILYADEKNIGVDLNRRTVVIATMYNVLRRAYYPIEIDTVVYQCKIRKNTITRALKMYEDYYSHFKSLYEQYHLNAAKKLI.

This sequence belongs to the asfivirus C315R family.

This is an uncharacterized protein from Ornithodoros (relapsing fever ticks).